The following is a 177-amino-acid chain: Immunity protein CdiI-YPIII (177 aa).

In terms of assembly, interacts with the C-terminal DNase fragment (residues 954-1077) of cognate toxin CdiA-YPIII.

Immunity protein component of a toxin-immunity protein module, which functions as a cellular contact-dependent growth inhibition (CDI) system. CDI modules allow bacteria to communicate with and inhibit the growth of closely related neighboring bacteria in a contact-dependent fashion. Neutralizes the toxic activity of cognate toxin CdiA-YPIII (residues 954-1077). Does not inhibit toxic activity of CdiA from other toxin-immunity modules. The sequence is that of Immunity protein CdiI-YPIII from Yersinia pseudotuberculosis serotype O:3 (strain YPIII).